We begin with the raw amino-acid sequence, 206 residues long: Large ribosomal subunit protein uL4 (206 aa).

The tract at residues 48-78 (THSVKTRGHVSGGGAKPWRQKGTGRARAGSN) is disordered.

Belongs to the universal ribosomal protein uL4 family. Part of the 50S ribosomal subunit.

Functionally, one of the primary rRNA binding proteins, this protein initially binds near the 5'-end of the 23S rRNA. It is important during the early stages of 50S assembly. It makes multiple contacts with different domains of the 23S rRNA in the assembled 50S subunit and ribosome. In terms of biological role, forms part of the polypeptide exit tunnel. In Lawsonia intracellularis (strain PHE/MN1-00), this protein is Large ribosomal subunit protein uL4.